The chain runs to 637 residues: Nucleoside triphosphatase I (637 aa).

One can recognise a Helicase ATP-binding domain in the interval 43-205 (FLGLNSMNSI…QMLVNLLRPG (163 aa)). Residue 56–63 (QETGVGKT) coordinates ATP. The DEXH box motif lies at 142–145 (DECH). Positions 358-537 (ELYNYLYEHS…QLYKVFKHSS (180 aa)) constitute a Helicase C-terminal domain. The binding to the cap-specific mRNA (nucleoside-2'-O-)-methyltransferase stretch occupies residues 459 to 526 (DIFILDMTWN…DIIQSKSKEF (68 aa)).

Belongs to the helicase family. NPH I subfamily. Monomer. Interacts (via C-terminus) with RAP94 (via N-terminus). Interacts with the cap-specific mRNA (nucleoside-2'-O-)-methyltransferase.

It is found in the virion. It carries out the reaction a ribonucleoside 5'-triphosphate + H2O = a ribonucleoside 5'-diphosphate + phosphate + H(+). Its function is as follows. DNA-dependent ATPase required for providing the needed energy to achieve the termination of early transcripts. Acts in concert with the RAP94 subunit of the virion RNA polymerase and the capping enzyme/VTF to catalyze release of UUUUUNU-containing nascent RNA from the elongation complex. NPH-I must bind ssDNA in order to exhibit ATPase activity. The protein is Nucleoside triphosphatase I (NPH1) of Vertebrata (FPV).